The primary structure comprises 287 residues: Undecaprenyl-diphosphatase (287 aa).

Helical transmembrane passes span 6 to 26 (LHLLKAFFLGIVEGLTEFIPV), 45 to 65 (SGKVFEVVIQFGSILAVMWIF), 89 to 109 (NLLLAFLPAAVIGAIFIKSIK), 111 to 131 (VFYHPGVVAVTLVVGGFIMLW), 204 to 224 (ATEFSFFLAMPTMLGAAVYDL), 238 to 258 (AIAVGFVAAFLSALVVVRAVL), and 266 to 286 (YRVFAWYRIALGLVVAAWIYA).

It belongs to the UppP family.

It localises to the cell inner membrane. It carries out the reaction di-trans,octa-cis-undecaprenyl diphosphate + H2O = di-trans,octa-cis-undecaprenyl phosphate + phosphate + H(+). Catalyzes the dephosphorylation of undecaprenyl diphosphate (UPP). Confers resistance to bacitracin. The sequence is that of Undecaprenyl-diphosphatase from Bordetella bronchiseptica (strain ATCC BAA-588 / NCTC 13252 / RB50) (Alcaligenes bronchisepticus).